The following is a 398-amino-acid chain: 1-deoxy-D-xylulose 5-phosphate reductoisomerase (398 aa).

Residues T11, G12, S13, I14, R38, N39, and N125 each coordinate NADPH. K126 contributes to the 1-deoxy-D-xylulose 5-phosphate binding site. E127 is a binding site for NADPH. D151 provides a ligand contact to Mn(2+). 4 residues coordinate 1-deoxy-D-xylulose 5-phosphate: S152, E153, S179, and H202. E153 contributes to the Mn(2+) binding site. NADPH is bound at residue G208. The 1-deoxy-D-xylulose 5-phosphate site is built by S215, N220, K221, and E224. Mn(2+) is bound at residue E224.

This sequence belongs to the DXR family. Mg(2+) is required as a cofactor. It depends on Mn(2+) as a cofactor.

It catalyses the reaction 2-C-methyl-D-erythritol 4-phosphate + NADP(+) = 1-deoxy-D-xylulose 5-phosphate + NADPH + H(+). It participates in isoprenoid biosynthesis; isopentenyl diphosphate biosynthesis via DXP pathway; isopentenyl diphosphate from 1-deoxy-D-xylulose 5-phosphate: step 1/6. Its function is as follows. Catalyzes the NADPH-dependent rearrangement and reduction of 1-deoxy-D-xylulose-5-phosphate (DXP) to 2-C-methyl-D-erythritol 4-phosphate (MEP). The polypeptide is 1-deoxy-D-xylulose 5-phosphate reductoisomerase (Burkholderia pseudomallei (strain 1106a)).